A 697-amino-acid chain; its full sequence is Polyribonucleotide nucleotidyltransferase (697 aa).

Asp-488 and Asp-494 together coordinate Mg(2+). Residues 555-614 (PTFEVITINPDKIRDVIGKGGATIRQITEETKAAIDIEDNGTVRVFGETKAAARAAIAKI) form the KH domain. The region spanning 624-692 (GKIYDGKVIR…NRGRIKLSMK (69 aa)) is the S1 motif domain.

The protein belongs to the polyribonucleotide nucleotidyltransferase family. Component of the RNA degradosome, which is a multiprotein complex involved in RNA processing and mRNA degradation. It depends on Mg(2+) as a cofactor.

The protein localises to the cytoplasm. It carries out the reaction RNA(n+1) + phosphate = RNA(n) + a ribonucleoside 5'-diphosphate. Functionally, involved in mRNA degradation. Catalyzes the phosphorolysis of single-stranded polyribonucleotides processively in the 3'- to 5'-direction. This Acinetobacter baylyi (strain ATCC 33305 / BD413 / ADP1) protein is Polyribonucleotide nucleotidyltransferase.